A 195-amino-acid chain; its full sequence is MSKAMIGKPAPEFTATAVVDGDFKSISLSDYKGKYVVLFFYPMDFTFVCPTEIIAFSEHVGEFKKLGVEVLAASTDSQFSHLAWINTPRKQGGLGEMKIPIISDNNHQISRDYGVLKEDDGIAYRGLFIIDPKGILRQITVNDLPVGRSVTETLRLVQAFQFVDKHGEVCPAGWTPGADTIKPGVKESKAYFEKH.

The 159-residue stretch at 4-162 (AMIGKPAPEF…TLRLVQAFQF (159 aa)) folds into the Thioredoxin domain. C49 functions as the Cysteine sulfenic acid (-SOH) intermediate in the catalytic mechanism.

Belongs to the peroxiredoxin family. AhpC/Prx1 subfamily. Homodimer; disulfide-linked, upon oxidation.

It carries out the reaction a hydroperoxide + [thioredoxin]-dithiol = an alcohol + [thioredoxin]-disulfide + H2O. In terms of biological role, thiol-specific peroxidase that catalyzes the reduction of hydrogen peroxide and organic hydroperoxides to water and alcohols, respectively. Plays a role in cell protection against oxidative stress by detoxifying peroxides and as sensor of hydrogen peroxide-mediated signaling events. In Ascaris suum (Pig roundworm), this protein is Peroxiredoxin.